We begin with the raw amino-acid sequence, 216 residues long: MSTPYYPHPIIAREGWPFIAGAFAVALLVQFMAGWLWALPFWLIALFVLQFFRDPPRVVPALAGAVLAPADGRIVAVDKVQDPYLPREALKVSVFMNVFNVHSNRSPVDGEIRNRWYFPGNFLNASLPKASLENERNALWIRTDGGQDVTCVQIAGLIAKRIVCHVHPGEHLARGQRFGFIRFGSRVDVYLPLGTKVNVAIGDKVYATQTVLAEFH.

The active-site Schiff-base intermediate with substrate; via pyruvic acid is S185. S185 bears the Pyruvic acid (Ser); by autocatalysis mark.

It belongs to the phosphatidylserine decarboxylase family. PSD-A subfamily. As to quaternary structure, heterodimer of a large membrane-associated beta subunit and a small pyruvoyl-containing alpha subunit. The cofactor is pyruvate. In terms of processing, is synthesized initially as an inactive proenzyme. Formation of the active enzyme involves a self-maturation process in which the active site pyruvoyl group is generated from an internal serine residue via an autocatalytic post-translational modification. Two non-identical subunits are generated from the proenzyme in this reaction, and the pyruvate is formed at the N-terminus of the alpha chain, which is derived from the carboxyl end of the proenzyme. The post-translation cleavage follows an unusual pathway, termed non-hydrolytic serinolysis, in which the side chain hydroxyl group of the serine supplies its oxygen atom to form the C-terminus of the beta chain, while the remainder of the serine residue undergoes an oxidative deamination to produce ammonia and the pyruvoyl prosthetic group on the alpha chain.

Its subcellular location is the cell membrane. It catalyses the reaction a 1,2-diacyl-sn-glycero-3-phospho-L-serine + H(+) = a 1,2-diacyl-sn-glycero-3-phosphoethanolamine + CO2. The protein operates within phospholipid metabolism; phosphatidylethanolamine biosynthesis; phosphatidylethanolamine from CDP-diacylglycerol: step 2/2. Catalyzes the formation of phosphatidylethanolamine (PtdEtn) from phosphatidylserine (PtdSer). The chain is Phosphatidylserine decarboxylase proenzyme from Nitrosomonas europaea (strain ATCC 19718 / CIP 103999 / KCTC 2705 / NBRC 14298).